Here is a 387-residue protein sequence, read N- to C-terminus: 3-ketoacyl-CoA thiolase (387 aa).

C91 serves as the catalytic Acyl-thioester intermediate. Residues H343 and C373 each act as proton acceptor in the active site.

It belongs to the thiolase-like superfamily. Thiolase family. In terms of assembly, heterotetramer of two alpha chains (FadB) and two beta chains (FadA).

The protein resides in the cytoplasm. The catalysed reaction is an acyl-CoA + acetyl-CoA = a 3-oxoacyl-CoA + CoA. It participates in lipid metabolism; fatty acid beta-oxidation. Catalyzes the final step of fatty acid oxidation in which acetyl-CoA is released and the CoA ester of a fatty acid two carbons shorter is formed. This Shigella flexneri serotype 5b (strain 8401) protein is 3-ketoacyl-CoA thiolase.